A 406-amino-acid chain; its full sequence is 4-hydroxy-3-methylbut-2-en-1-yl diphosphate synthase (ferredoxin) (406 aa).

Residues C315, C318, C349, and E356 each contribute to the [4Fe-4S] cluster site.

The protein belongs to the IspG family. [4Fe-4S] cluster serves as cofactor.

The enzyme catalyses (2E)-4-hydroxy-3-methylbut-2-enyl diphosphate + 2 oxidized [2Fe-2S]-[ferredoxin] + H2O = 2-C-methyl-D-erythritol 2,4-cyclic diphosphate + 2 reduced [2Fe-2S]-[ferredoxin] + H(+). Its pathway is isoprenoid biosynthesis; isopentenyl diphosphate biosynthesis via DXP pathway; isopentenyl diphosphate from 1-deoxy-D-xylulose 5-phosphate: step 5/6. In terms of biological role, converts 2C-methyl-D-erythritol 2,4-cyclodiphosphate (ME-2,4cPP) into 1-hydroxy-2-methyl-2-(E)-butenyl 4-diphosphate. This is 4-hydroxy-3-methylbut-2-en-1-yl diphosphate synthase (ferredoxin) from Rippkaea orientalis (strain PCC 8801 / RF-1) (Cyanothece sp. (strain PCC 8801)).